Consider the following 500-residue polypeptide: L-arabinose isomerase (500 aa).

Residues Glu-306, Glu-333, His-350, and His-450 each contribute to the Mn(2+) site.

Belongs to the arabinose isomerase family. In terms of assembly, homohexamer. Mn(2+) serves as cofactor.

It catalyses the reaction beta-L-arabinopyranose = L-ribulose. Its pathway is carbohydrate degradation; L-arabinose degradation via L-ribulose; D-xylulose 5-phosphate from L-arabinose (bacterial route): step 1/3. Catalyzes the conversion of L-arabinose to L-ribulose. The polypeptide is L-arabinose isomerase (Escherichia coli (strain 55989 / EAEC)).